Reading from the N-terminus, the 254-residue chain is Ribosomal RNA small subunit methyltransferase G (254 aa).

Residues 84-109 (NTESKTSLNNAETKNTNEALLTSEPF) form an insert region. Residues glycine 115, phenylalanine 120, 171–172 (AE), and arginine 185 contribute to the S-adenosyl-L-methionine site.

The protein belongs to the methyltransferase superfamily. RNA methyltransferase RsmG family.

It is found in the cytoplasm. Its function is as follows. Specifically methylates the N7 position of a guanine in 16S rRNA. The polypeptide is Ribosomal RNA small subunit methyltransferase G (Treponema denticola (strain ATCC 35405 / DSM 14222 / CIP 103919 / JCM 8153 / KCTC 15104)).